The primary structure comprises 126 residues: MALSKEDILNAIAEMSVMDVVELVAAMEEKFGVSAAAAVAVAAPAAGGDAGGAAAEQTEFDVILASAGEKKVNVIKAVRGITGLGLKEAKELVDGAPSPIKEGVSKDDAEEAKKLLEEAGASVELK.

This sequence belongs to the bacterial ribosomal protein bL12 family. In terms of assembly, homodimer. Part of the ribosomal stalk of the 50S ribosomal subunit. Forms a multimeric L10(L12)X complex, where L10 forms an elongated spine to which 2 to 4 L12 dimers bind in a sequential fashion. Binds GTP-bound translation factors.

In terms of biological role, forms part of the ribosomal stalk which helps the ribosome interact with GTP-bound translation factors. Is thus essential for accurate translation. The chain is Large ribosomal subunit protein bL12 from Saccharophagus degradans (strain 2-40 / ATCC 43961 / DSM 17024).